We begin with the raw amino-acid sequence, 139 residues long: Large ribosomal subunit protein uL16 (139 aa).

This sequence belongs to the universal ribosomal protein uL16 family. As to quaternary structure, part of the 50S ribosomal subunit.

Its function is as follows. Binds 23S rRNA and is also seen to make contacts with the A and possibly P site tRNAs. This Gloeothece citriformis (strain PCC 7424) (Cyanothece sp. (strain PCC 7424)) protein is Large ribosomal subunit protein uL16.